A 378-amino-acid polypeptide reads, in one-letter code: Odorant receptor 33a (378 aa).

At 1–33 the chain is on the cytoplasmic side; the sequence is MDSRRKVRSENLYKTYWLYWRLLGVEGDYPFRR. A helical transmembrane segment spans residues 34–54; sequence LVDFTITSFITILFPVHLILG. Topologically, residues 55–62 are extracellular; that stretch reads MYKKPQIQ. The helical transmembrane segment at 63-83 threads the bilayer; the sequence is VFRSLHFTSECLFCSYKFFCF. Over 84 to 127 the chain is Cytoplasmic; it reads RWKLKEIKTIEGLLQDLDSRVESEEERNYFNQNPSRVARMLSKS. Residues 128 to 148 form a helical membrane-spanning segment; that stretch reads YLVAAISAIITATVAGLFSTG. Residues 149–163 lie on the Extracellular side of the membrane; the sequence is RNLMYLGWFPYDFQA. Residues 164–184 traverse the membrane as a helical segment; that stretch reads TAAIYWISFSYQAIGSSLLIL. Over 185 to 254 the chain is Cytoplasmic; that stretch reads ENLANDSYPP…LLRSTLHLSQ (70 aa). The helical transmembrane segment at 255–275 threads the bilayer; it reads LGQFLSSGINISITLINILFF. Residues 276–285 are Extracellular-facing; it reads AENNFAMLYY. Residues 286-306 form a helical membrane-spanning segment; it reads AVFFAAMLIELFPSCYYGILM. The Cytoplasmic segment spans residues 307–355; that stretch reads TMEFDKLPYAIFSSNWLKMDKRYNRSLIILMQLTLVPVNIKAGGIVGID. A helical membrane pass occupies residues 356–376; the sequence is MSAFFATVRMAYSFYTLALSF. The Extracellular portion of the chain corresponds to 377–378; it reads RV.

The protein belongs to the insect chemoreceptor superfamily. Heteromeric odorant receptor channel (TC 1.A.69) family. Or2a subfamily. Interacts with Orco. Complexes exist early in the endomembrane system in olfactory sensory neurons (OSNs), coupling these complexes to the conserved ciliary trafficking pathway. Expressed in 1-2 cells on the distal edge of the antenna but not the maxillary palp.

It is found in the cell membrane. Functionally, odorant receptor which mediates acceptance or avoidance behavior, depending on its substrates. The odorant receptor repertoire encodes a large collection of odor stimuli that vary widely in identity, intensity, and duration. May form a complex with Orco to form odorant-sensing units, providing sensitive and prolonged odorant signaling and calcium permeability. The protein is Odorant receptor 33a (Or33a) of Drosophila melanogaster (Fruit fly).